A 304-amino-acid chain; its full sequence is ATP phosphoribosyltransferase (304 aa).

Belongs to the ATP phosphoribosyltransferase family. Long subfamily. Mg(2+) serves as cofactor.

The protein resides in the cytoplasm. It carries out the reaction 1-(5-phospho-beta-D-ribosyl)-ATP + diphosphate = 5-phospho-alpha-D-ribose 1-diphosphate + ATP. Its pathway is amino-acid biosynthesis; L-histidine biosynthesis; L-histidine from 5-phospho-alpha-D-ribose 1-diphosphate: step 1/9. Feedback inhibited by histidine. Catalyzes the condensation of ATP and 5-phosphoribose 1-diphosphate to form N'-(5'-phosphoribosyl)-ATP (PR-ATP). Has a crucial role in the pathway because the rate of histidine biosynthesis seems to be controlled primarily by regulation of HisG enzymatic activity. The polypeptide is ATP phosphoribosyltransferase (Xanthomonas euvesicatoria pv. vesicatoria (strain 85-10) (Xanthomonas campestris pv. vesicatoria)).